Consider the following 499-residue polypeptide: Lysine--tRNA ligase (499 aa).

E409 and E416 together coordinate Mg(2+).

It belongs to the class-II aminoacyl-tRNA synthetase family. Homodimer. The cofactor is Mg(2+).

Its subcellular location is the cytoplasm. It carries out the reaction tRNA(Lys) + L-lysine + ATP = L-lysyl-tRNA(Lys) + AMP + diphosphate. In Thioalkalivibrio sulfidiphilus (strain HL-EbGR7), this protein is Lysine--tRNA ligase.